The sequence spans 200 residues: MNEQPNEELQSEDEQFDPQETVSFEGETAANDEAFAEAGEETRDEEMTRLRGEVEEASKRVLQAQAEAENFRKRLRRDTEAQLKFAGMPLVTDILQVRDNLLRAIEAATTAGDGESAAGLVEGVSMVRKQLDDVLAKHAIKEIPAEGELFDPNFHEAISQMPHPEIASGMVAHVATPGFQMHDRVVRPAQVVVSTGDGSA.

Acidic residues-rich tracts occupy residues 1–17 (MNEQ…EQFD) and 34–44 (AFAEAGEETRD). Residues 1 to 49 (MNEQPNEELQSEDEQFDPQETVSFEGETAANDEAFAEAGEETRDEEMTR) are disordered.

This sequence belongs to the GrpE family. In terms of assembly, homodimer.

It localises to the cytoplasm. Functionally, participates actively in the response to hyperosmotic and heat shock by preventing the aggregation of stress-denatured proteins, in association with DnaK and GrpE. It is the nucleotide exchange factor for DnaK and may function as a thermosensor. Unfolded proteins bind initially to DnaJ; upon interaction with the DnaJ-bound protein, DnaK hydrolyzes its bound ATP, resulting in the formation of a stable complex. GrpE releases ADP from DnaK; ATP binding to DnaK triggers the release of the substrate protein, thus completing the reaction cycle. Several rounds of ATP-dependent interactions between DnaJ, DnaK and GrpE are required for fully efficient folding. The sequence is that of Protein GrpE from Rhodopirellula baltica (strain DSM 10527 / NCIMB 13988 / SH1).